The primary structure comprises 113 residues: UPF0482 protein YnfB (113 aa).

The first 28 residues, 1–28 (MNYTLSKRLCLTAMLTLAAVVYTTSAFA), serve as a signal peptide directing secretion.

The protein belongs to the UPF0482 family.

This is UPF0482 protein YnfB from Salmonella arizonae (strain ATCC BAA-731 / CDC346-86 / RSK2980).